A 256-amino-acid chain; its full sequence is Calsenilin (256 aa).

Residues 1–22 (MQRTKEAMKASDGSLLGDPGRI) form a disordered region. A Phosphoserine modification is found at serine 14. Lysine 26 participates in a covalent cross-link: Glycyl lysine isopeptide (Lys-Gly) (interchain with G-Cter in SUMO1). S-palmitoyl cysteine attachment occurs at residues cysteine 45 and cysteine 46. Residues serine 60 and serine 63 each carry the phosphoserine modification. The 57-residue stretch at 67–123 (LELSTVRHQPEGLDQLQAQTKFTKKELQSLYRGFKNECPTGLVDEDTFKLIYSQFFP) folds into the EF-hand 1; degenerate domain. A Glycyl lysine isopeptide (Lys-Gly) (interchain with G-Cter in SUMO1) cross-link involves residue lysine 90. EF-hand domains lie at 126–161 (DATT…LLRG), 162–197 (TVHE…IYDM), and 210–245 (APLE…DENI). Ca(2+) is bound by residues aspartate 175, asparagine 177, aspartate 179, tyrosine 181, glutamate 186, aspartate 223, asparagine 225, aspartate 227, and glutamate 234. Residues 243–256 (ENIMSSMQLFENVI) form an interaction with KCND2 region.

This sequence belongs to the recoverin family. Binds to DNA as a homomultimer. Dimerization is induced by binding to calcium. Interacts with the C-terminus of PSEN1 and PSEN2 and with PSEN2 CTF subunit. Associates with KCN1. Component of heteromultimeric potassium channels. Identified in potassium channel complexes containing KCND1, KCND2, KCND3, KCNIP1, KCNIP2, KCNIP3, KCNIP4, DPP6 and DPP10. Interacts with KCND2 and KCND3. Palmitoylated. Palmitoylation enhances association with the plasma membrane. In terms of processing, proteolytically cleaved by caspase-3. Detected in brain cortex, thalamus, dentate gyrus and cerebellum (at protein level). Expressed in brain. Colocalizes with KCND2 in excitatory neurons including cortical and hippocampal CA1 pyramidal cells.

It is found in the cytoplasm. It localises to the cell membrane. The protein resides in the endoplasmic reticulum. Its subcellular location is the golgi apparatus. The protein localises to the nucleus. Functionally, calcium-dependent transcriptional repressor that binds to the DRE element of genes including PDYN and FOS. Affinity for DNA is reduced upon binding to calcium and enhanced by binding to magnesium. Seems to be involved in nociception. Its function is as follows. Regulatory subunit of Kv4/D (Shal)-type voltage-gated rapidly inactivating A-type potassium channels, such as KCND2/Kv4.2 and KCND3/Kv4.3. Modulates channel expression at the cell membrane, gating characteristics, inactivation kinetics and rate of recovery from inactivation in a calcium-dependent and isoform-specific manner. In terms of biological role, may play a role in the regulation of PSEN2 proteolytic processing and apoptosis. Together with PSEN2 involved in modulation of amyloid-beta formation. This chain is Calsenilin (Kcnip3), found in Rattus norvegicus (Rat).